The sequence spans 74 residues: Exodeoxyribonuclease 7 small subunit (74 aa).

The protein belongs to the XseB family. As to quaternary structure, heterooligomer composed of large and small subunits.

The protein localises to the cytoplasm. It catalyses the reaction Exonucleolytic cleavage in either 5'- to 3'- or 3'- to 5'-direction to yield nucleoside 5'-phosphates.. Its function is as follows. Bidirectionally degrades single-stranded DNA into large acid-insoluble oligonucleotides, which are then degraded further into small acid-soluble oligonucleotides. The protein is Exodeoxyribonuclease 7 small subunit of Neisseria meningitidis serogroup C / serotype 2a (strain ATCC 700532 / DSM 15464 / FAM18).